We begin with the raw amino-acid sequence, 655 residues long: Potassium voltage-gated channel subfamily A member 4 (655 aa).

The Cytoplasmic segment spans residues 1–306 (MEVAMVSAES…LLFEYPESSS (306 aa)). The disordered stretch occupies residues 24 to 153 (QARARERERL…SEEDHGDGCS (130 aa)). The span at 36–50 (SRAAAAAAVAAATAA) shows a compositional bias: low complexity. The span at 81-90 (GSREEEATRT) shows a compositional bias: basic and acidic residues. A compositionally biased stretch (basic residues) spans 91–100 (EKKKKLHHRQ). A Phosphoserine modification is found at serine 123. Over residues 123–138 (SEEEEDEEEEEEEEEE) the composition is skewed to acidic residues. Basic and acidic residues predominate over residues 139–150 (GRFYYSEEDHGD). Residues 307-328 (PARGIAIVSVLVILISIVIFCL) form a helical membrane-spanning segment. Topologically, residues 329–372 (ETLPEFRDDRDLIMALSAGGHSRLLNDTSAPHLENSGHTIFNDP) are extracellular. N-linked (GlcNAc...) asparagine glycosylation is present at asparagine 354. A helical transmembrane segment spans residues 373 to 394 (FFIVETVCIVWFSFEFVVRCFA). The Cytoplasmic segment spans residues 395–405 (CPSQALFFKNI). The helical transmembrane segment at 406–426 (MNIIDIVSILPYFITLGTDLA) threads the bilayer. Topologically, residues 427–441 (QQQGGGNGQQQQAMS) are extracellular. The chain crosses the membrane as a helical; Voltage-sensor span at residues 442–462 (FAILRIIRLVRVFRIFKLSRH). Residues 463-477 (SKGLQILGHTLRASM) lie on the Cytoplasmic side of the membrane. Residues 464-477 (KGLQILGHTLRASM) are S4-S5 linker. A helical transmembrane segment spans residues 478 to 499 (RELGLLIFFLFIGVILFSSAVY). Topologically, residues 500–513 (FAEADEPTTHFQSI) are extracellular. The segment at residues 514–525 (PDAFWWAVVTMT) is an intramembrane region (helical). Positions 526-531 (TVGYGD) match the Selectivity filter motif. An intramembrane segment occupies 526-533 (TVGYGDMK). The Extracellular segment spans residues 534 to 540 (PITVGGK). A helical membrane pass occupies residues 541–569 (IVGSLCAIAGVLTIALPVPVIVSNFNYFY). At 570-655 (HRETENEEQT…SNAKAVETDV (86 aa)) the chain is on the cytoplasmic side. At serine 601 the chain carries Phosphoserine; by PKA. Basic and acidic residues predominate over residues 631–642 (CQGKGDDSETDK). Residues 631–655 (CQGKGDDSETDKNNCSNAKAVETDV) are disordered. The short motif at 653-655 (TDV) is the PDZ-binding element.

This sequence belongs to the potassium channel family. A (Shaker) (TC 1.A.1.2) subfamily. Kv1.4/KCNA4 sub-subfamily. In terms of assembly, homotetramer and heterotetramer of potassium channel proteins. Interacts with KCNAB1 and KCNAB2. Interacts with DLG1, DLG2 and DLG4 via their PDZ domains. Interacts with SIGMAR1. Part of a complex containing KCNA1, KCNAB1 and LGI1. Detected in a complex with KCNA1. Interacts with KCNA2. Interacts (via cytoplasmic N-terminal domain) with KCNRG. N-glycosylated. In terms of tissue distribution, detected in brain (at protein level). Heart and brain.

The protein resides in the cell membrane. Its subcellular location is the cell projection. The protein localises to the axon. The enzyme catalyses K(+)(in) = K(+)(out). Its function is as follows. Voltage-gated potassium channel that mediates transmembrane potassium transport in excitable membranes. Forms tetrameric potassium-selective channels through which potassium ions pass in accordance with their electrochemical gradient. The channel alternates between opened and closed conformations in response to the voltage difference across the membrane. Can form functional homotetrameric channels and heterotetrameric channels that contain variable proportions of KCNA1, KCNA2, KCNA4, KCNA5, and possibly other family members as well; channel properties depend on the type of alpha subunits that are part of the channel. Channel properties are modulated by cytoplasmic beta subunits that regulate the subcellular location of the alpha subunits and promote rapid inactivation. In vivo, membranes probably contain a mixture of heteromeric potassium channel complexes, making it difficult to assign currents observed in intact tissues to any particular potassium channel family member. Homotetrameric KCNA4 forms a potassium channel that opens in response to membrane depolarization, followed by rapid spontaneous channel closure. Likewise, a heterotetrameric channel formed by KCNA1 and KCNA4 shows rapid inactivation. The sequence is that of Potassium voltage-gated channel subfamily A member 4 (Kcna4) from Rattus norvegicus (Rat).